The sequence spans 372 residues: Lysophosphatidic acid receptor 5 (372 aa).

Residues 1–30 (MFANSSANTTSTNSSVLQCPDYRDTHRLHM) are Extracellular-facing. N-linked (GlcNAc...) asparagine glycans are attached at residues N4, N8, and N13. Residues 31 to 51 (VVYSLVLATGLPLNALALWVF) form a helical membrane-spanning segment. Topologically, residues 52 to 59 (LRVLRVHS) are cytoplasmic. Residues 60 to 80 (VVSVYMCNLAASDLLFTLSLP) form a helical membrane-spanning segment. The Extracellular segment spans residues 81 to 100 (LRLSYYAQHHWPFPGFLCQT). C98 and C179 are disulfide-bonded. A helical transmembrane segment spans residues 101–121 (SGAIFQMNMYGSCLFLMLINV). The Cytoplasmic segment spans residues 122–140 (DRYAAIVHPLRLRHLRRPR). Residues 141–161 (VARRLCLGVWALILLFAVPAA) traverse the membrane as a helical segment. Residues 162–191 (RVHSPSHCTYKNITVRLCFESFSDELWKGR) are Extracellular-facing. N173 is a glycosylation site (N-linked (GlcNAc...) asparagine). A helical membrane pass occupies residues 192–212 (LLPLLLLAEILGFLLPLAAVV). The Cytoplasmic segment spans residues 213 to 243 (YSSGRVFWTLARPDATQSQRRRKTVRLLLAN). A helical transmembrane segment spans residues 244–264 (LIIFLLCFVPYNSTLAVYGLL). Residues 265–280 (RANLVKNSIQDRDQVR) lie on the Extracellular side of the membrane. A helical transmembrane segment spans residues 281–301 (GVLMIMVLLAGANCVLDPLVY). Over 302–372 (YFSAEGFRNT…PDNCSQDSAL (71 aa)) the chain is Cytoplasmic.

Belongs to the G-protein coupled receptor 1 family.

The protein localises to the cell membrane. Functionally, receptor for lysophosphatidic acid (LPA), a mediator of diverse cellular activities. This chain is Lysophosphatidic acid receptor 5 (Lpar5), found in Mus musculus (Mouse).